We begin with the raw amino-acid sequence, 187 residues long: ADP-ribosylation factor-like protein 9 (187 aa).

GTP is bound by residues 25–32 (GLDGAGKT), 69–73 (EIGGS), and 126–129 (NKQD).

This sequence belongs to the small GTPase superfamily. Arf family.

This chain is ADP-ribosylation factor-like protein 9 (ARL9), found in Homo sapiens (Human).